The following is a 693-amino-acid chain: Putative tyrosinase-like protein tyr-3 (693 aa).

A signal peptide spans 1–18 (MIRYIILLVYFLIFEVNS). Residues H142, H152, H161, H281, H285, and H308 each contribute to the Cu cation site. 4 ShKT domains span residues 472–506 (CFNENECCGPWSAKGECQKNPVYMNVWCKASCRQC), 516–550 (CSDRHTNCAMWSRSGECNKNPLWMSENCRSSCQKC), 591–625 (CYNEDQCCPIWAQRGQCRSNPGYMTCQCKVSCGVC), and 634–667 (CADYHYDCAAWARRGECLKNKWMPENCRRSCNTC). 12 disulfide bridges follow: C472/C506, C479/C499, C488/C503, C516/C550, C523/C543, C532/C547, C591/C625, C598/C618, C607/C622, C634/C667, C641/C660, and C650/C664.

This sequence belongs to the tyrosinase family. Cu(2+) is required as a cofactor.

This Caenorhabditis elegans protein is Putative tyrosinase-like protein tyr-3 (tyr-3).